The primary structure comprises 496 residues: Glycerol kinase 2 (496 aa).

Residue threonine 11 coordinates ADP. ATP contacts are provided by threonine 11, threonine 12, and serine 13. Threonine 11 is a sn-glycerol 3-phosphate binding site. An ADP-binding site is contributed by arginine 15. Residues arginine 81, glutamate 82, tyrosine 133, and aspartate 242 each coordinate sn-glycerol 3-phosphate. Glycerol is bound by residues arginine 81, glutamate 82, tyrosine 133, aspartate 242, and glutamine 243. ADP contacts are provided by threonine 264 and glycine 307. Residues threonine 264, glycine 307, glutamine 311, and glycine 408 each coordinate ATP. Residues glycine 408 and asparagine 412 each coordinate ADP.

The protein belongs to the FGGY kinase family.

The enzyme catalyses glycerol + ATP = sn-glycerol 3-phosphate + ADP + H(+). It functions in the pathway polyol metabolism; glycerol degradation via glycerol kinase pathway; sn-glycerol 3-phosphate from glycerol: step 1/1. Inhibited by fructose 1,6-bisphosphate (FBP). In terms of biological role, key enzyme in the regulation of glycerol uptake and metabolism. Catalyzes the phosphorylation of glycerol to yield sn-glycerol 3-phosphate. This chain is Glycerol kinase 2, found in Thermotoga maritima (strain ATCC 43589 / DSM 3109 / JCM 10099 / NBRC 100826 / MSB8).